The sequence spans 353 residues: C2 calcium-dependent domain-containing protein 4D (353 aa).

Residues 135–191 (CRAPDSDTASSPDSSPFGSPRPGLGRRRVSRPHSLSPEKASSADTSPHSPRRAGPPT) are disordered. Residues 140–150 (SDTASSPDSSP) are compositionally biased toward low complexity. The 127-residue stretch at 217 to 343 (RGGQLRLSTE…PPLGGGLGPG (127 aa)) folds into the C2 domain.

This chain is C2 calcium-dependent domain-containing protein 4D (C2CD4D), found in Homo sapiens (Human).